The primary structure comprises 364 residues: Chorismate synthase (364 aa).

Residues Arg-48 and Arg-54 each contribute to the NADP(+) site. FMN-binding positions include 129 to 131 (RSS), 243 to 244 (NA), Gly-288, 303 to 307 (KPTSS), and Arg-329.

Belongs to the chorismate synthase family. As to quaternary structure, homotetramer. Requires FMNH2 as cofactor.

The catalysed reaction is 5-O-(1-carboxyvinyl)-3-phosphoshikimate = chorismate + phosphate. The protein operates within metabolic intermediate biosynthesis; chorismate biosynthesis; chorismate from D-erythrose 4-phosphate and phosphoenolpyruvate: step 7/7. Functionally, catalyzes the anti-1,4-elimination of the C-3 phosphate and the C-6 proR hydrogen from 5-enolpyruvylshikimate-3-phosphate (EPSP) to yield chorismate, which is the branch point compound that serves as the starting substrate for the three terminal pathways of aromatic amino acid biosynthesis. This reaction introduces a second double bond into the aromatic ring system. This chain is Chorismate synthase, found in Chelativorans sp. (strain BNC1).